A 313-amino-acid polypeptide reads, in one-letter code: Ribosomal RNA small subunit methyltransferase H (313 aa).

S-adenosyl-L-methionine-binding positions include 35–37 (GGH), D55, F79, D101, and Q108.

This sequence belongs to the methyltransferase superfamily. RsmH family.

It is found in the cytoplasm. It catalyses the reaction cytidine(1402) in 16S rRNA + S-adenosyl-L-methionine = N(4)-methylcytidine(1402) in 16S rRNA + S-adenosyl-L-homocysteine + H(+). In terms of biological role, specifically methylates the N4 position of cytidine in position 1402 (C1402) of 16S rRNA. This chain is Ribosomal RNA small subunit methyltransferase H, found in Musicola paradisiaca (strain Ech703) (Dickeya paradisiaca).